The chain runs to 231 residues: GTP-binding protein RHO3 (231 aa).

23-30 contacts GTP; sequence GDGACGKT. The Effector region motif lies at 45–53; that stretch reads YEPTVFENY. Residues 70–74 and 128–131 contribute to the GTP site; these read DTAGQ and LKCD. Over residues 139–150 the composition is skewed to polar residues; the sequence is SNAITPNNIQQD. The interval 139-165 is disordered; it reads SNAITPNNIQQDNSVSNDNGNNINSTS. The span at 151–165 shows a compositional bias: low complexity; it reads NSVSNDNGNNINSTS. Cys-228 carries the cysteine methyl ester modification. The S-farnesyl cysteine moiety is linked to residue Cys-228. Residues 229–231 constitute a propeptide, removed in mature form; that stretch reads TIM.

Belongs to the small GTPase superfamily. Rho family. In terms of assembly, interacts with TOS7.

The protein resides in the cell membrane. Its activity is regulated as follows. Activity is positively regulated by the GTPase activating protein (GAP) RGD1. Its function is as follows. Plays an important role in cell growth. Required to keep the uninucleated state. Modulates morphogenesis during bud growth via directing organization of the actin cytoskeleton and the position of the secretory machinery for exocytosis. This Saccharomyces cerevisiae (strain ATCC 204508 / S288c) (Baker's yeast) protein is GTP-binding protein RHO3.